The chain runs to 117 residues: uncharacterized protein (117 aa).

2 helical membrane passes run 43–63 (APIM…LMLL) and 73–93 (AVQH…VFIV).

The protein resides in the cell membrane. This is an uncharacterized protein from Bacillus subtilis (strain 168).